The sequence spans 254 residues: 5'/3'-nucleotidase SurE (254 aa).

The a divalent metal cation site is built by Asp-9, Asp-10, Ser-40, and Asn-93.

This sequence belongs to the SurE nucleotidase family. It depends on a divalent metal cation as a cofactor.

The protein localises to the cytoplasm. It carries out the reaction a ribonucleoside 5'-phosphate + H2O = a ribonucleoside + phosphate. The enzyme catalyses a ribonucleoside 3'-phosphate + H2O = a ribonucleoside + phosphate. The catalysed reaction is [phosphate](n) + H2O = [phosphate](n-1) + phosphate + H(+). Nucleotidase with a broad substrate specificity as it can dephosphorylate various ribo- and deoxyribonucleoside 5'-monophosphates and ribonucleoside 3'-monophosphates with highest affinity to 3'-AMP. Also hydrolyzes polyphosphate (exopolyphosphatase activity) with the preference for short-chain-length substrates (P20-25). Might be involved in the regulation of dNTP and NTP pools, and in the turnover of 3'-mononucleotides produced by numerous intracellular RNases (T1, T2, and F) during the degradation of various RNAs. The polypeptide is 5'/3'-nucleotidase SurE (Photorhabdus laumondii subsp. laumondii (strain DSM 15139 / CIP 105565 / TT01) (Photorhabdus luminescens subsp. laumondii)).